We begin with the raw amino-acid sequence, 485 residues long: MEWEIVIGLETHVQLATESKIFSGSSTRFGAAPNTQANEVDLALPGSLPVMNRGAAERAILFGLAIGAKIAPRSVFARKNYFYPDLPKGYQISQYELPVVVGGTLSFFVGEEEKTINLTRAHLEEDAGKSLHDEFHLANGAPASGIDLNRAGTPLLEIVTEPEMRSAAEAVAYARALHGLVVWLGICDGNMQEGSFRCDANVSVRPRGQVEFGTRAEIKNVNSFRFLERAIQYEVRRQIELIEDGGKVVQETRLYDAERDETRSMRSKEDAHDYRYFPDPDLPTLVIGQDWVEAVRATMPELPSAMRARFEADFGLPAYDAAQLTISRKLAAYFEAVARALPAGQAKLAANWIMGEVTATLNREEKDIADTPVQAAQLAALINRIIDGTISNKIARDVFAAMWAGENGGEPDAIIEARGLKQISDTGTISAMIDEVLAANPAIVAEYRAGKEKAFNSLVGQIMKAARGKANPQQVNDLLKAKLSA.

It belongs to the GatB/GatE family. GatB subfamily. Heterotrimer of A, B and C subunits.

The catalysed reaction is L-glutamyl-tRNA(Gln) + L-glutamine + ATP + H2O = L-glutaminyl-tRNA(Gln) + L-glutamate + ADP + phosphate + H(+). It carries out the reaction L-aspartyl-tRNA(Asn) + L-glutamine + ATP + H2O = L-asparaginyl-tRNA(Asn) + L-glutamate + ADP + phosphate + 2 H(+). Allows the formation of correctly charged Asn-tRNA(Asn) or Gln-tRNA(Gln) through the transamidation of misacylated Asp-tRNA(Asn) or Glu-tRNA(Gln) in organisms which lack either or both of asparaginyl-tRNA or glutaminyl-tRNA synthetases. The reaction takes place in the presence of glutamine and ATP through an activated phospho-Asp-tRNA(Asn) or phospho-Glu-tRNA(Gln). The polypeptide is Aspartyl/glutamyl-tRNA(Asn/Gln) amidotransferase subunit B (Bordetella avium (strain 197N)).